The sequence spans 627 residues: Phosphomethylpyrimidine synthase (627 aa).

A compositionally biased stretch (polar residues) spans 1-24 (MSATQKNNITRLEQLDRQSTQPFP). The disordered stretch occupies residues 1–29 (MSATQKNNITRLEQLDRQSTQPFPNSRKV). Substrate contacts are provided by residues N231, M260, Y289, H325, 345-347 (SRG), 386-389 (DGLR), and E425. Position 429 (H429) interacts with Zn(2+). Substrate is bound at residue Y452. H493 is a binding site for Zn(2+). [4Fe-4S] cluster-binding residues include C573, C576, and C581.

It belongs to the ThiC family. In terms of assembly, homodimer. Requires [4Fe-4S] cluster as cofactor.

It catalyses the reaction 5-amino-1-(5-phospho-beta-D-ribosyl)imidazole + S-adenosyl-L-methionine = 4-amino-2-methyl-5-(phosphooxymethyl)pyrimidine + CO + 5'-deoxyadenosine + formate + L-methionine + 3 H(+). Its pathway is cofactor biosynthesis; thiamine diphosphate biosynthesis. Catalyzes the synthesis of the hydroxymethylpyrimidine phosphate (HMP-P) moiety of thiamine from aminoimidazole ribotide (AIR) in a radical S-adenosyl-L-methionine (SAM)-dependent reaction. In Pseudomonas aeruginosa (strain UCBPP-PA14), this protein is Phosphomethylpyrimidine synthase.